A 252-amino-acid chain; its full sequence is Isoprenyl transferase (252 aa).

Aspartate 32 is a catalytic residue. Aspartate 32 provides a ligand contact to Mg(2+). Substrate is bound by residues 33-36 (GNGR), tryptophan 37, arginine 45, histidine 49, and 77-79 (STE). The active-site Proton acceptor is asparagine 80. Substrate contacts are provided by residues tryptophan 81, arginine 83, arginine 200, and 206-208 (RLS). Glutamate 219 lines the Mg(2+) pocket.

It belongs to the UPP synthase family. Homodimer. The cofactor is Mg(2+).

Catalyzes the condensation of isopentenyl diphosphate (IPP) with allylic pyrophosphates generating different type of terpenoids. The protein is Isoprenyl transferase of Oceanobacillus iheyensis (strain DSM 14371 / CIP 107618 / JCM 11309 / KCTC 3954 / HTE831).